The following is a 233-amino-acid chain: 7-cyano-7-deazaguanine synthase (233 aa).

13-23 (LSGGLDSATAM) contacts ATP. Cysteine 197, cysteine 207, cysteine 210, and cysteine 213 together coordinate Zn(2+).

It belongs to the QueC family. The cofactor is Zn(2+).

It carries out the reaction 7-carboxy-7-deazaguanine + NH4(+) + ATP = 7-cyano-7-deazaguanine + ADP + phosphate + H2O + H(+). The protein operates within purine metabolism; 7-cyano-7-deazaguanine biosynthesis. Catalyzes the ATP-dependent conversion of 7-carboxy-7-deazaguanine (CDG) to 7-cyano-7-deazaguanine (preQ(0)). The protein is 7-cyano-7-deazaguanine synthase of Desulfatibacillum aliphaticivorans.